The chain runs to 71 residues: Glucose-repressible gene protein (71 aa).

Residues 19–71 (TATASKEANKDVAKDSNQGVGTRLNAAGDAISDKVSENKHDAKAEAHKQGATH) form a disordered region. Residues 49 to 71 (ISDKVSENKHDAKAEAHKQGATH) show a composition bias toward basic and acidic residues.

In Neurospora crassa (strain ATCC 24698 / 74-OR23-1A / CBS 708.71 / DSM 1257 / FGSC 987), this protein is Glucose-repressible gene protein (grg-1).